Consider the following 186-residue polypeptide: Apolipophorin-3 (186 aa).

Residues 1–18 (MAAKYVFVVAACSALAQA) form the signal peptide. The propeptide occupies 19–23 (GIVRR).

Belongs to the insect apolipophorin-3 family. Equilibrium between a soluble monomer and a bound lipoprotein form. Apolipophorin-3 associates with lipophorin during lipid loading until each particle contains 9 or 14 molecules of apolipophorin-3. Expressed in hemolymph. Also found in hemocytes and fat body.

It is found in the secreted. Functionally, assists in the loading of diacylglycerol, generated from triacylglycerol stores in the fat body through the action of adipokinetic hormone, into lipophorin, the hemolymph lipoprotein. It increases the lipid carrying capacity of lipophorin by covering the expanding hydrophobic surface resulting from diacylglycerol uptake. It thus plays a critical role in the transport of lipids during flight in several species of insects. Has antibacterial activity against the Gram-positive bacteria L.monocytogenes (MIC=6.5 uM). Lacks antibacterial activity against the Gram-positive bacteria B.circulans, M.luteus, S.aureus, and S.lutea, and the Gram-negative bacteria E.coli D31, E.coli ATCC 25922, and S.typhimurium. Lacks antifungal activity against S.cerevisiae, P.pastoris, Z.marxianus, C.albicans, C.wickerhamii, A.niger, F.oxysporum, and T.harizianum. This is Apolipophorin-3 from Galleria mellonella (Greater wax moth).